The primary structure comprises 443 residues: Probable glycine dehydrogenase (decarboxylating) subunit 1 (443 aa).

It belongs to the GcvP family. N-terminal subunit subfamily. The glycine cleavage system is composed of four proteins: P, T, L and H. In this organism, the P 'protein' is a heterodimer of two subunits.

It catalyses the reaction N(6)-[(R)-lipoyl]-L-lysyl-[glycine-cleavage complex H protein] + glycine + H(+) = N(6)-[(R)-S(8)-aminomethyldihydrolipoyl]-L-lysyl-[glycine-cleavage complex H protein] + CO2. Functionally, the glycine cleavage system catalyzes the degradation of glycine. The P protein binds the alpha-amino group of glycine through its pyridoxal phosphate cofactor; CO(2) is released and the remaining methylamine moiety is then transferred to the lipoamide cofactor of the H protein. The chain is Probable glycine dehydrogenase (decarboxylating) subunit 1 from Chloroherpeton thalassium (strain ATCC 35110 / GB-78).